The sequence spans 689 residues: Methionine--tRNA ligase (689 aa).

The short motif at 15–25 is the 'HIGH' region element; it reads PYANGPIHLGH. The Zn(2+) site is built by Cys146, Cys149, Cys159, and Cys162. A 'KMSKS' region motif is present at residues 332-336; the sequence is KMSKS. Lys335 contributes to the ATP binding site. The 102-residue stretch at 588–689 folds into the tRNA-binding domain; it reads DFAKIDLRIA…EGAQPGMRVK (102 aa).

Belongs to the class-I aminoacyl-tRNA synthetase family. MetG type 1 subfamily. In terms of assembly, homodimer. Zn(2+) serves as cofactor.

It is found in the cytoplasm. The enzyme catalyses tRNA(Met) + L-methionine + ATP = L-methionyl-tRNA(Met) + AMP + diphosphate. In terms of biological role, is required not only for elongation of protein synthesis but also for the initiation of all mRNA translation through initiator tRNA(fMet) aminoacylation. In Shewanella sp. (strain W3-18-1), this protein is Methionine--tRNA ligase.